The following is a 464-amino-acid chain: Chaperone SurA (464 aa).

A signal peptide spans Met1 to Ala25. PpiC domains follow at residues Gly175 to Glu277 and Ala292 to Gly391. The interval Pro439–His464 is disordered.

It localises to the periplasm. The catalysed reaction is [protein]-peptidylproline (omega=180) = [protein]-peptidylproline (omega=0). Functionally, chaperone involved in the correct folding and assembly of outer membrane proteins. Recognizes specific patterns of aromatic residues and the orientation of their side chains, which are found more frequently in integral outer membrane proteins. May act in both early periplasmic and late outer membrane-associated steps of protein maturation. The protein is Chaperone SurA of Xylella fastidiosa (strain 9a5c).